Here is a 238-residue protein sequence, read N- to C-terminus: Enoyl-CoA delta isomerase 3 (238 aa).

The protein belongs to the enoyl-CoA hydratase/isomerase family.

The protein localises to the cytoplasm. It is found in the nucleus. It carries out the reaction a (3Z)-enoyl-CoA = a 4-saturated (2E)-enoyl-CoA. The enzyme catalyses a (3E)-enoyl-CoA = a 4-saturated (2E)-enoyl-CoA. The protein operates within lipid metabolism; fatty acid beta-oxidation. In terms of biological role, able to isomerize both 3-cis and 3-trans double bonds into the 2-trans form in a range of enoyl-CoA species. Essential for the beta oxidation of unsaturated fatty acids. This chain is Enoyl-CoA delta isomerase 3, found in Arabidopsis thaliana (Mouse-ear cress).